The primary structure comprises 364 residues: ATP synthase gamma chain, chloroplastic (364 aa).

The N-terminal 41 residues, 1 to 41 (MACSLSFSSSVSTFHLPTTTQSTQAPPNNATTLPTTNPIQC), are a transit peptide targeting the chloroplast. The segment at 17 to 36 (PTTTQSTQAPPNNATTLPTT) is disordered. Over residues 25–36 (APPNNATTLPTT) the composition is skewed to low complexity. Cys130 is an active-site residue. Residues Cys240 and Cys246 are joined by a disulfide bond.

The protein belongs to the ATPase gamma chain family. F-type ATPases have 2 components, CF(1) - the catalytic core - and CF(0) - the membrane proton channel. CF(1) has five subunits: alpha(3), beta(3), gamma(1), delta(1), epsilon(1). CF(0) has four main subunits: a, b, b' and c. Post-translationally, disulfide bond; Cys-240 and Cys-246 are known to form a disulfide bridge in the dark which gives rise to an inactive enzyme. Activation can be brought about by a ferredoxin-dependent reduction of the disulfide bond in the light.

The protein localises to the plastid. It is found in the chloroplast thylakoid membrane. Produces ATP from ADP in the presence of a proton gradient across the membrane. The gamma chain is believed to be important in regulating ATPase activity and the flow of protons through the CF(0) complex. The sequence is that of ATP synthase gamma chain, chloroplastic (ATPC) from Spinacia oleracea (Spinach).